Here is a 316-residue protein sequence, read N- to C-terminus: Na(+)-translocating NADH-quinone reductase subunit C (316 aa).

Residues Trp-13–Val-33 traverse the membrane as a helical segment. Thr-280 carries the post-translational modification FMN phosphoryl threonine.

This sequence belongs to the NqrC family. Composed of six subunits; NqrA, NqrB, NqrC, NqrD, NqrE and NqrF. The cofactor is FMN.

Its subcellular location is the cell inner membrane. The catalysed reaction is a ubiquinone + n Na(+)(in) + NADH + H(+) = a ubiquinol + n Na(+)(out) + NAD(+). NQR complex catalyzes the reduction of ubiquinone-1 to ubiquinol by two successive reactions, coupled with the transport of Na(+) ions from the cytoplasm to the periplasm. NqrA to NqrE are probably involved in the second step, the conversion of ubisemiquinone to ubiquinol. This Chlamydia trachomatis serovar D (strain ATCC VR-885 / DSM 19411 / UW-3/Cx) protein is Na(+)-translocating NADH-quinone reductase subunit C.